Consider the following 375-residue polypeptide: Trichodiene synthase (375 aa).

It belongs to the trichodiene synthase family.

It catalyses the reaction (2E,6E)-farnesyl diphosphate = trichodiene + diphosphate. It functions in the pathway sesquiterpene biosynthesis; trichothecene biosynthesis. In terms of biological role, TS is a member of the terpene cyclase group of enzymes. It catalyzes the isomerization and cyclization of farnesyl pyro-phosphate to form trichodiene, the first cyclic intermediate in the biosynthetic pathway for trichothecenes. It serves to branch trichothecene biosynthesis from the isoprenoid pathway. The protein is Trichodiene synthase (TRI5) of Fusarium asiaticum.